The primary structure comprises 318 residues: Methionyl-tRNA formyltransferase (318 aa).

A (6S)-5,6,7,8-tetrahydrofolate-binding site is contributed by 120–123; that stretch reads SLLP.

The protein belongs to the Fmt family.

The enzyme catalyses L-methionyl-tRNA(fMet) + (6R)-10-formyltetrahydrofolate = N-formyl-L-methionyl-tRNA(fMet) + (6S)-5,6,7,8-tetrahydrofolate + H(+). Attaches a formyl group to the free amino group of methionyl-tRNA(fMet). The formyl group appears to play a dual role in the initiator identity of N-formylmethionyl-tRNA by promoting its recognition by IF2 and preventing the misappropriation of this tRNA by the elongation apparatus. The chain is Methionyl-tRNA formyltransferase from Variovorax paradoxus (strain S110).